We begin with the raw amino-acid sequence, 189 residues long: Riboflavin kinase (189 aa).

Mg(2+) is bound by residues threonine 42 and asparagine 44. Residue glutamate 124 is the Nucleophile of the active site.

The protein belongs to the flavokinase family. The cofactor is Zn(2+). Mg(2+) serves as cofactor.

It carries out the reaction riboflavin + ATP = FMN + ADP + H(+). The protein operates within cofactor biosynthesis; FMN biosynthesis; FMN from riboflavin (ATP route): step 1/1. In terms of biological role, catalyzes the phosphorylation of riboflavin (vitamin B2) to form flavin mononucleotide (FMN) coenzyme. This chain is Riboflavin kinase (FMN1), found in Candida glabrata (strain ATCC 2001 / BCRC 20586 / JCM 3761 / NBRC 0622 / NRRL Y-65 / CBS 138) (Yeast).